We begin with the raw amino-acid sequence, 92 residues long: Large ribosomal subunit protein eL31 (92 aa).

This sequence belongs to the eukaryotic ribosomal protein eL31 family.

This is Large ribosomal subunit protein eL31 from Pyrobaculum arsenaticum (strain DSM 13514 / JCM 11321 / PZ6).